The following is a 456-amino-acid chain: Exodeoxyribonuclease 7 large subunit (456 aa).

This sequence belongs to the XseA family. In terms of assembly, heterooligomer composed of large and small subunits.

It localises to the cytoplasm. The catalysed reaction is Exonucleolytic cleavage in either 5'- to 3'- or 3'- to 5'-direction to yield nucleoside 5'-phosphates.. Functionally, bidirectionally degrades single-stranded DNA into large acid-insoluble oligonucleotides, which are then degraded further into small acid-soluble oligonucleotides. The sequence is that of Exodeoxyribonuclease 7 large subunit from Lactobacillus delbrueckii subsp. bulgaricus (strain ATCC BAA-365 / Lb-18).